Consider the following 191-residue polypeptide: IMP cyclohydrolase (191 aa).

It belongs to the archaeal IMP cyclohydrolase family.

The enzyme catalyses IMP + H2O = 5-formamido-1-(5-phospho-D-ribosyl)imidazole-4-carboxamide. The protein operates within purine metabolism; IMP biosynthesis via de novo pathway; IMP from 5-formamido-1-(5-phospho-D-ribosyl)imidazole-4-carboxamide: step 1/1. Its function is as follows. Catalyzes the cyclization of 5-formylamidoimidazole-4-carboxamide ribonucleotide to IMP. This is IMP cyclohydrolase from Natronomonas pharaonis (strain ATCC 35678 / DSM 2160 / CIP 103997 / JCM 8858 / NBRC 14720 / NCIMB 2260 / Gabara) (Halobacterium pharaonis).